Consider the following 362-residue polypeptide: D-alanine--D-alanine ligase (362 aa).

An ATP-grasp domain is found at 153 to 357 (KKIAREAGIP…YADLLTTLVS (205 aa)). 180 to 235 (RELLGLPVFVKPARGGSSIGISKVDSWRDLPAAIEEAASHDPKVIIEAMITGPEVE) contacts ATP. The Mg(2+) site is built by aspartate 312, glutamate 324, and asparagine 326.

The protein belongs to the D-alanine--D-alanine ligase family. Requires Mg(2+) as cofactor. The cofactor is Mn(2+).

The protein resides in the cytoplasm. The catalysed reaction is 2 D-alanine + ATP = D-alanyl-D-alanine + ADP + phosphate + H(+). It participates in cell wall biogenesis; peptidoglycan biosynthesis. Its function is as follows. Cell wall formation. This chain is D-alanine--D-alanine ligase, found in Corynebacterium urealyticum (strain ATCC 43042 / DSM 7109).